The chain runs to 188 residues: MDTDKDKIFLDSQERMVKAITSLEKEFTKLRTGRASTSIVDTIKVDYYGTPTPINQLASIAIPDSSSITIQPWDKTAFNPIEKAILKSELGLTPINDGKIIRITLPPLTEDRRKDLVKLARKYGEDTKIAIRNIRRDANEQLKRLEKNKFISEDELKGFTEDIQKMTDNYIKEVETHCKTKEKEIIEI.

The protein belongs to the RRF family.

The protein localises to the cytoplasm. Its function is as follows. Responsible for the release of ribosomes from messenger RNA at the termination of protein biosynthesis. May increase the efficiency of translation by recycling ribosomes from one round of translation to another. The chain is Ribosome-recycling factor from Lawsonia intracellularis (strain PHE/MN1-00).